Reading from the N-terminus, the 168-residue chain is Transcription antitermination protein NusB (168 aa).

The protein belongs to the NusB family.

In terms of biological role, involved in transcription antitermination. Required for transcription of ribosomal RNA (rRNA) genes. Binds specifically to the boxA antiterminator sequence of the ribosomal RNA (rrn) operons. This is Transcription antitermination protein NusB from Bradyrhizobium sp. (strain ORS 278).